Reading from the N-terminus, the 130-residue chain is Small ribosomal subunit protein uS9 (130 aa).

The protein belongs to the universal ribosomal protein uS9 family.

The sequence is that of Small ribosomal subunit protein uS9 from Paraburkholderia phymatum (strain DSM 17167 / CIP 108236 / LMG 21445 / STM815) (Burkholderia phymatum).